A 464-amino-acid chain; its full sequence is Fumarate hydratase class II (464 aa).

Substrate is bound by residues 96–98 (SGT), 127–130 (HPND), 137–139 (SSN), and threonine 185. The Proton donor/acceptor role is filled by histidine 186. Serine 316 is a catalytic residue. Substrate is bound by residues serine 317 and 322–324 (KVN).

It belongs to the class-II fumarase/aspartase family. Fumarase subfamily. In terms of assembly, homotetramer.

It localises to the cytoplasm. The catalysed reaction is (S)-malate = fumarate + H2O. It participates in carbohydrate metabolism; tricarboxylic acid cycle; (S)-malate from fumarate: step 1/1. Its function is as follows. Involved in the TCA cycle. Catalyzes the stereospecific interconversion of fumarate to L-malate. This is Fumarate hydratase class II from Pseudomonas syringae pv. tomato (strain ATCC BAA-871 / DC3000).